The chain runs to 688 residues: MNPLALLVEILIIIEVTTKNTEAERYNRKQKEVNVTTQVSVSKVKQFLLYLLEQGNANKITNKRENPLEKKKHQHKLKIKGIQNKNLLKRNQNYFKNPAKKSITDEGDELFKMGNKILQESKSQKQKTEAYTLFTRAANMGNLKAMEKMADAWLFGSFGMQNITAAIQLYESLAKEGSYKAQNALGFLSSYGIGMEYDQAKALIYYTFGSAGGSMMSQMILGYRYLSGINVLQNCEVALNHYKKVADYIADKLEKSEGIPVEKVRLTERPENLSSNSEILDWDIYQYYKFLAERGDVQIQVSLGQLHLIGRKGLDQDYSKALYYFLKAAKAGSANAMAFIGKMYFEGNAAAPQNNATAFKYFSMAASKGNAIGLHGLGLLYFHGKGVPVNYGEALKYFQKAAEKGWPNAQFQLGFMYYSGSGVWKDYKLAFKYFYLASQSGQPLAIYYLAEMYATGTGVLRSCRTAVELYKGVCELGHWAEKFLTAYFAYKDGDIDSSLIQYALLAEMGYEVAQSNSAFILESKKAKILGKEKLYPMALLLWNRAAIQGNAFARVKIGDYHYYGYGTKKDYETAATHYSIAADKHHSAQAMFNLAYMYEHGLGIAKDIHLARRLYDMAAQTSPDAHIPVFFALMKLETMHLLHDILFFNFTMKWKWLKLDSTVGPYWDLLVIGLIVAMLIFLLRNRHR.

The N-terminal stretch at 1–18 is a signal peptide; it reads MNPLALLVEILIIIEVTT. Residues 19 to 662 lie on the Extracellular side of the membrane; sequence KNTEAERYNR…KWKWLKLDST (644 aa). N-linked (GlcNAc...) asparagine glycosylation occurs at asparagine 34. Sel1-like repeat units lie at residues 107 to 142, 143 to 178, 179 to 214, 215 to 250, 297 to 333, 334 to 370, 371 to 406, 407 to 442, 443 to 478, 551 to 586, and 588 to 623; these read GDELFKMGNKILQESKSQKQKTEAYTLFTRAANMGN, LKAMEKMADAWLFGSFGMQNITAAIQLYESLAKEGS, YKAQNALGFLSSYGIGMEYDQAKALIYYTFGSAGGS, MMSQMILGYRYLSGINVLQNCEVALNHYKKVADYIA, VQIQVSLGQLHLIGRKGLDQDYSKALYYFLKAAKAGS, ANAMAFIGKMYFEGNAAAPQNNATAFKYFSMAASKGN, AIGLHGLGLLYFHGKGVPVNYGEALKYFQKAAEKGW, PNAQFQLGFMYYSGSGVWKDYKLAFKYFYLASQSGQ, PLAIYYLAEMYATGTGVLRSCRTAVELYKGVCELGH, AFARVKIGDYHYYGYGTKKDYETAATHYSIAADKHH, and AQAMFNLAYMYEHGLGIAKDIHLARRLYDMAAQTSP. The N-linked (GlcNAc...) asparagine glycan is linked to asparagine 162. A helical membrane pass occupies residues 663-683; the sequence is VGPYWDLLVIGLIVAMLIFLL. Residues 684–688 lie on the Cytoplasmic side of the membrane; the sequence is RNRHR.

Belongs to the sel-1 family.

It is found in the membrane. Its subcellular location is the cell projection. It localises to the cilium. The protein localises to the nucleus speckle. The polypeptide is Protein sel-1 homolog 2 (Sel1l2) (Mus musculus (Mouse)).